Reading from the N-terminus, the 512-residue chain is Oxalate--CoA ligase (512 aa).

168–179 (HTSGTTGRPKVV) is a binding site for ATP. Serine 283 and serine 284 each carry phosphoserine. The FACS signature appears at 381–429 (DRFFRTGDEGKLDKDGYVFITGRIKELVNRGGEKISPAEIDAVLMQHPD). Positions 510-512 (AKL) match the Microbody targeting signal motif.

It belongs to the ATP-dependent AMP-binding enzyme family.

It is found in the peroxisome matrix. The protein resides in the peroxisome membrane. It catalyses the reaction oxalate + ATP + CoA = oxalyl-CoA + AMP + diphosphate. Functionally, catalyzes the first step in a degradation pathway of oxalate to CO(2) to protect the cell against the harmful effects of oxalate derived from endogenous processes or an environmental sources. The polypeptide is Oxalate--CoA ligase (pcs60) (Schizosaccharomyces pombe (strain 972 / ATCC 24843) (Fission yeast)).